The primary structure comprises 845 residues: Ribosome-releasing factor 2, mitochondrial (845 aa).

Residues 1 to 28 (MIIATSLRSQTFCTWRAWRAVHSTAVRL) constitute a mitochondrion transit peptide. The region spanning 38 to 330 (DRTRNIGIIA…GVVKYLPSPL (293 aa)) is the tr-type G domain. GTP contacts are provided by residues 47–54 (AHIDAGKT), 111–115 (DTPGH), and 165–168 (NKMD).

It belongs to the TRAFAC class translation factor GTPase superfamily. Classic translation factor GTPase family. EF-G/EF-2 subfamily.

The protein localises to the mitochondrion. Mitochondrial GTPase that mediates the disassembly of ribosomes from messenger RNA at the termination of mitochondrial protein biosynthesis. Not involved in the GTP-dependent ribosomal translocation step during translation elongation. The polypeptide is Ribosome-releasing factor 2, mitochondrial (Scheffersomyces stipitis (strain ATCC 58785 / CBS 6054 / NBRC 10063 / NRRL Y-11545) (Yeast)).